The primary structure comprises 216 residues: Pentapeptide repeat protein VPA0095 (216 aa).

The protein belongs to the pentapeptide repeat protein family.

In terms of biological role, has no effect when overexpressed in E.coli. When Cys-115 is mutated to Tyr and overexpressed it increases (fluoro)quinolone resistance in E.coli up to 16-fold for ciprofloxacin, levofloxacin and nalidixic acid. This Vibrio parahaemolyticus serotype O3:K6 (strain RIMD 2210633) protein is Pentapeptide repeat protein VPA0095.